The chain runs to 1353 residues: MSSKSQQPPTGLSKSAAKKRAKKAAKQSQNPQPQSAPQTSSQTPASVPPLPPASVPDPLDPAFFNFPGPGSYPIDVQYDDTAYYDQVDVPLNQGDFPGSYSIDYNLSLQNGSQLAGLSAPFNITHDDLISAANELYKRMADPEFGSDDAYWSSLPPHIRQFIRDAVPFTGSISQSTPGTTSSQRTMYQMAQQIVQAASQGMGLGHGMSANLMPGINANARSFPSPQQTIGEEFGFHRHPDTREEEYDDEEEIEEDQGHPAANGDAPKKKNKKKKKKGANAASLSAPVEPPAPLPPLPPPSTLSKIPRAPAPVPQPQLPTHQPQPLSQQPPSLNPLPPPAPASAPTPTPPSSRAAGKQPMGTNPPANPPARSARAAGKAPASAAPPHNAHAGHSHNHPSTAKPAPKGKSPATAPPAKIWTQSSAEDRENIRVFWLGLSEAERRDLLRIEKDAVLKKMKEQHRHSCGCAVCGRKKVNIEMELDQLYEQYYDELRSYAAEQRVAANGLRPPPSGAGPFPGSVEVDASGTVTQYDHRAPELHDHDPDDLDGEESEEYDDDDDYADDDELDDDDIGTDEADVGDEIDEPPPPPPITHRQQPRRPPVKAPPRSEGGDDFLSFGSNLATIKGGILTIADDMLKNDGTKFLEMMEQLAIRRSVREEQNLRDMQEETDEEEEEEDDDESRDEPMTEKERAEEGKRMFQIFAARMFEQRVLQAYRERVAKQREEQLLRELEEEEDSKRAKEEKKAKEAQKKKDKKKAQKQKAEEERLAREAALEEEKRQAKLRKEEAERERMRRQDEERVRREAVKRAAQEEAQRQALERKRRQQEEKEREEEAAKKKREREEKAKKEREARENELKEKERKEREIKAAKEKAEKERIAKETLEKAERDRLAKEAKEKAEKIRQERLEASRMEKVRKEEAARKEREAVEQAKIIAAQQAQRERAAKAEKNTADKAAAERISAARVIPVAATAPVLATLGLKSPSKGSTPQSAPPVPQLSPVKGAARPITNATPGRSMQKTPTAYYPQPVPPVGVASFSRMPLAQSFGPPGLRPAYPTGSPAYSPPRANGSSISPNPPSRGFTDPSPPGFDHNLRTAPIGVGFPPVKPSGRIPSMADDAFSPTAPIGVPVTRSVSSAGEMGSLISGSVTPDDYRPTPPAPIAPPNLGPIGRPSFSDGQTSGPNVLRSTSPPPPDRVLGSAALGADDEIVQPQQRRPTTSWDMPTAAPGSGRWSASPSIWGSGDPTPAPSWGAPGSMPTVAERPGPPPGLSLSPGAGVNVLGQRQPSFGGIGSSFGGVGAVGSVIGGGMGGTAGSGLVQGHVGGGGYSQGLFSPQHQQQQQLQLQLQLQQQQQQQ.

Over residues Met1–Leu12 the composition is skewed to polar residues. Disordered regions lie at residues Met1–Phe66, Asn216–Ser422, Asn503–Asp522, Asp531–Ser618, Arg652–Gly694, Leu727–Thr882, Gly979–Phe1119, Gly1140–Val1276, and Gly1308–Gln1337. Basic residues predominate over residues Ala16–Ala25. Low complexity predominate over residues Lys26–Ala45. Residues Ser46–Leu59 show a composition bias toward pro residues. Residues Asn218–Ile229 are compositionally biased toward polar residues. A compositionally biased stretch (acidic residues) spans Arg242 to Glu254. A compositionally biased stretch (basic residues) spans Lys268–Gly277. A compositionally biased stretch (pro residues) spans Val287–Ser300. Positions Leu317–Pro330 are enriched in low complexity. Residues Ser331–Pro349 show a composition bias toward pro residues. The segment covering Pro368–Ala388 has biased composition (low complexity). A compositionally biased stretch (basic and acidic residues) spans Asp531–Asp541. Residues Pro542 to Glu583 show a composition bias toward acidic residues. Over residues Ser654–Gln665 the composition is skewed to basic and acidic residues. Acidic residues predominate over residues Glu666–Arg681. Basic and acidic residues-rich tracts occupy residues Asp682 to Gly694, Leu727 to Lys750, and Gln760 to Thr882. The stretch at Ala713–Ala944 forms a coiled coil. Over residues Thr1009–Pro1021 the composition is skewed to polar residues. Residues Pro1154–Leu1165 show a composition bias toward pro residues. 2 stretches are compositionally biased toward polar residues: residues Ser1174–Thr1187 and Gln1209–Asp1220.

Belongs to the NST1 family.

The protein localises to the cytoplasm. In terms of biological role, may act as a negative regulator of salt tolerance. This chain is Stress response protein NST1 (NST1), found in Cryptococcus neoformans var. neoformans serotype D (strain B-3501A) (Filobasidiella neoformans).